A 250-amino-acid chain; its full sequence is Hydroxyacylglutathione hydrolase (250 aa).

Zn(2+)-binding residues include His-53, His-55, Asp-57, His-58, His-110, Asp-127, and His-165.

Belongs to the metallo-beta-lactamase superfamily. Glyoxalase II family. As to quaternary structure, monomer. The cofactor is Zn(2+).

The catalysed reaction is an S-(2-hydroxyacyl)glutathione + H2O = a 2-hydroxy carboxylate + glutathione + H(+). It participates in secondary metabolite metabolism; methylglyoxal degradation; (R)-lactate from methylglyoxal: step 2/2. Functionally, thiolesterase that catalyzes the hydrolysis of S-D-lactoyl-glutathione to form glutathione and D-lactic acid. The protein is Hydroxyacylglutathione hydrolase of Buchnera aphidicola subsp. Schizaphis graminum (strain Sg).